A 74-amino-acid polypeptide reads, in one-letter code: Capsid protein VP2 (74 aa).

It is found in the virion. Its function is as follows. This extremely basic protein may tightly bind to SSV1 DNA. Essential for virus function. This chain is Capsid protein VP2 (VP2), found in Saccharolobus solfataricus (Sulfolobus solfataricus).